Here is a 123-residue protein sequence, read N- to C-terminus: Large ribosomal subunit protein bL17 (123 aa).

This sequence belongs to the bacterial ribosomal protein bL17 family. In terms of assembly, part of the 50S ribosomal subunit. Contacts protein L32.

In Borreliella burgdorferi (strain ZS7) (Borrelia burgdorferi), this protein is Large ribosomal subunit protein bL17.